A 361-amino-acid chain; its full sequence is tRNA/tmRNA (uracil-C(5))-methyltransferase (361 aa).

The S-adenosyl-L-methionine site is built by Gln-185, Tyr-213, Asn-218, Glu-234, and Asp-294. Cys-319 serves as the catalytic Nucleophile. Glu-353 acts as the Proton acceptor in catalysis.

It belongs to the class I-like SAM-binding methyltransferase superfamily. RNA M5U methyltransferase family. TrmA subfamily.

It carries out the reaction uridine(54) in tRNA + S-adenosyl-L-methionine = 5-methyluridine(54) in tRNA + S-adenosyl-L-homocysteine + H(+). The catalysed reaction is uridine(341) in tmRNA + S-adenosyl-L-methionine = 5-methyluridine(341) in tmRNA + S-adenosyl-L-homocysteine + H(+). Its function is as follows. Dual-specificity methyltransferase that catalyzes the formation of 5-methyluridine at position 54 (m5U54) in all tRNAs, and that of position 341 (m5U341) in tmRNA (transfer-mRNA). This chain is tRNA/tmRNA (uracil-C(5))-methyltransferase, found in Pseudomonas putida (strain ATCC 700007 / DSM 6899 / JCM 31910 / BCRC 17059 / LMG 24140 / F1).